The sequence spans 500 residues: L-arabinose isomerase (500 aa).

The Mn(2+) site is built by E306, E333, H350, and H450.

This sequence belongs to the arabinose isomerase family. Homohexamer. Mn(2+) serves as cofactor.

The catalysed reaction is beta-L-arabinopyranose = L-ribulose. The protein operates within carbohydrate degradation; L-arabinose degradation via L-ribulose; D-xylulose 5-phosphate from L-arabinose (bacterial route): step 1/3. Its function is as follows. Catalyzes the conversion of L-arabinose to L-ribulose. The sequence is that of L-arabinose isomerase (araA) from Escherichia coli (strain K12).